Consider the following 180-residue polypeptide: UPF0227 protein YcfP (180 aa).

It belongs to the UPF0227 family.

The polypeptide is UPF0227 protein YcfP (Escherichia coli O9:H4 (strain HS)).